Consider the following 519-residue polypeptide: NADH-quinone oxidoreductase subunit C/D (519 aa).

The NADH dehydrogenase I subunit C stretch occupies residues 1-138; sequence MSERIEIPAE…TNEEPVDTTQ (138 aa). The interval 159 to 519 is NADH dehydrogenase I subunit D; it reads DEYIINIGPQ…VDYVVPDIDR (361 aa).

In the N-terminal section; belongs to the complex I 30 kDa subunit family. It in the C-terminal section; belongs to the complex I 49 kDa subunit family. In terms of assembly, NDH-1 is composed of 13 different subunits. Subunits NuoB, CD, E, F, and G constitute the peripheral sector of the complex.

Its subcellular location is the cell inner membrane. The catalysed reaction is a quinone + NADH + 5 H(+)(in) = a quinol + NAD(+) + 4 H(+)(out). NDH-1 shuttles electrons from NADH, via FMN and iron-sulfur (Fe-S) centers, to quinones in the respiratory chain. The immediate electron acceptor for the enzyme in this species is believed to be a menaquinone. Couples the redox reaction to proton translocation (for every two electrons transferred, four hydrogen ions are translocated across the cytoplasmic membrane), and thus conserves the redox energy in a proton gradient. In Phocaeicola vulgatus (strain ATCC 8482 / DSM 1447 / JCM 5826 / CCUG 4940 / NBRC 14291 / NCTC 11154) (Bacteroides vulgatus), this protein is NADH-quinone oxidoreductase subunit C/D.